The sequence spans 213 residues: Large ribosomal subunit protein uL1 (213 aa).

It belongs to the universal ribosomal protein uL1 family. Part of the 50S ribosomal subunit.

Functionally, binds directly to 23S rRNA. Probably involved in E site tRNA release. Protein L1 is also a translational repressor protein, it controls the translation of its operon by binding to its mRNA. The sequence is that of Large ribosomal subunit protein uL1 from Methanococcus maripaludis (strain DSM 14266 / JCM 13030 / NBRC 101832 / S2 / LL).